Here is a 233-residue protein sequence, read N- to C-terminus: 2,3,4,5-tetrahydropyridine-2,6-dicarboxylate N-acetyltransferase (233 aa).

The protein belongs to the transferase hexapeptide repeat family. DapH subfamily.

The enzyme catalyses (S)-2,3,4,5-tetrahydrodipicolinate + acetyl-CoA + H2O = L-2-acetamido-6-oxoheptanedioate + CoA. It functions in the pathway amino-acid biosynthesis; L-lysine biosynthesis via DAP pathway; LL-2,6-diaminopimelate from (S)-tetrahydrodipicolinate (acetylase route): step 1/3. Functionally, catalyzes the transfer of an acetyl group from acetyl-CoA to tetrahydrodipicolinate. This is 2,3,4,5-tetrahydropyridine-2,6-dicarboxylate N-acetyltransferase from Thermotoga sp. (strain RQ2).